Here is a 472-residue protein sequence, read N- to C-terminus: Argininosuccinate lyase (472 aa).

The protein belongs to the lyase 1 family. Argininosuccinate lyase subfamily.

Its subcellular location is the cytoplasm. It carries out the reaction 2-(N(omega)-L-arginino)succinate = fumarate + L-arginine. The protein operates within amino-acid biosynthesis; L-arginine biosynthesis; L-arginine from L-ornithine and carbamoyl phosphate: step 3/3. The sequence is that of Argininosuccinate lyase from Rhodococcus opacus (strain B4).